A 325-amino-acid polypeptide reads, in one-letter code: Thiamine-monophosphate kinase (325 aa).

Mg(2+) is bound by residues Asp30, Ser45, Thr46, and Asp47. His54 contributes to the substrate binding site. Positions 75 and 122 each coordinate Mg(2+). ATP contacts are provided by residues 121–122 and Arg146; that span reads GD. Asp212 is a binding site for Mg(2+). Residue Ser214 coordinates ATP. Asp215 contributes to the Mg(2+) binding site. 2 residues coordinate substrate: Glu263 and Tyr319.

Belongs to the thiamine-monophosphate kinase family.

It carries out the reaction thiamine phosphate + ATP = thiamine diphosphate + ADP. Its pathway is cofactor biosynthesis; thiamine diphosphate biosynthesis; thiamine diphosphate from thiamine phosphate: step 1/1. In terms of biological role, catalyzes the ATP-dependent phosphorylation of thiamine-monophosphate (TMP) to form thiamine-pyrophosphate (TPP), the active form of vitamin B1. This Salmonella typhimurium (strain LT2 / SGSC1412 / ATCC 700720) protein is Thiamine-monophosphate kinase (thiL).